A 414-amino-acid chain; its full sequence is Hydroxysqualene dehydroxylase (414 aa).

This sequence belongs to the HpnE family.

The catalysed reaction is squalene + FAD + H2O + H(+) = hydroxysqualene + FADH2. It functions in the pathway secondary metabolite biosynthesis; hopanoid biosynthesis. Functionally, involved in the biosynthesis of the hopanoid precursor squalene (SQ) from farnesyl diphosphate (FPP). Catalyzes the third (last) step, the reduction of hydroxysqualene (HSQ) to SQ. This chain is Hydroxysqualene dehydroxylase, found in Zymomonas mobilis subsp. mobilis (strain ATCC 31821 / ZM4 / CP4).